Here is a 227-residue protein sequence, read N- to C-terminus: Transcriptional regulatory protein CpxR homolog (227 aa).

Residues 3-115 enclose the Response regulatory domain; it reads KLLLVDDDIE…ELIARIKAIL (113 aa). At aspartate 51 the chain carries 4-aspartylphosphate. The segment at residues 128-227 is a DNA-binding region (ompR/PhoB-type); the sequence is VEILSFDGIT…LRGKGYALVT (100 aa).

In terms of processing, phosphorylated.

It localises to the cytoplasm. Its function is as follows. Member of a two-component regulatory system. The protein is Transcriptional regulatory protein CpxR homolog (cpxR) of Haemophilus influenzae (strain ATCC 51907 / DSM 11121 / KW20 / Rd).